A 388-amino-acid chain; its full sequence is Succinate--CoA ligase [ADP-forming] subunit beta (388 aa).

The 236-residue stretch at 9-244 folds into the ATP-grasp domain; that stretch reads KEILRKFGVA…LDEEDPAEIE (236 aa). ATP-binding positions include K46, 53–55, E99, A102, and E107; that span reads GRG. The Mg(2+) site is built by N199 and D213. Substrate-binding positions include N264 and 321–323; that span reads GIM.

This sequence belongs to the succinate/malate CoA ligase beta subunit family. Heterotetramer of two alpha and two beta subunits. Mg(2+) serves as cofactor.

The catalysed reaction is succinate + ATP + CoA = succinyl-CoA + ADP + phosphate. It catalyses the reaction GTP + succinate + CoA = succinyl-CoA + GDP + phosphate. It participates in carbohydrate metabolism; tricarboxylic acid cycle; succinate from succinyl-CoA (ligase route): step 1/1. Its function is as follows. Succinyl-CoA synthetase functions in the citric acid cycle (TCA), coupling the hydrolysis of succinyl-CoA to the synthesis of either ATP or GTP and thus represents the only step of substrate-level phosphorylation in the TCA. The beta subunit provides nucleotide specificity of the enzyme and binds the substrate succinate, while the binding sites for coenzyme A and phosphate are found in the alpha subunit. The protein is Succinate--CoA ligase [ADP-forming] subunit beta of Burkholderia mallei (strain NCTC 10247).